The following is a 555-amino-acid chain: Putative protein NRT1/ PTR FAMILY 2.14 (555 aa).

12 consecutive transmembrane segments (helical) span residues 62–82 (VTLI…GAFI), 93–113 (IVFG…TSLV), 135–155 (YSQL…TGGI), 181–201 (FFSW…TLVL), 209–229 (WGIG…LLFV), 234–254 (YVFV…LVAA), 319–339 (IKSI…FLAM), 363–383 (LIPP…WLPF), 405–425 (LQKV…SGIV), 441–461 (VFWL…TIVG), 480–500 (SLLY…VSIV), and 523–543 (CFYY…FWCA).

The protein belongs to the major facilitator superfamily. Proton-dependent oligopeptide transporter (POT/PTR) (TC 2.A.17) family. As to expression, not detected.

The protein localises to the membrane. This Arabidopsis thaliana (Mouse-ear cress) protein is Putative protein NRT1/ PTR FAMILY 2.14 (NPF2.14).